We begin with the raw amino-acid sequence, 503 residues long: U6 snRNA (guanine-N(2))-methyltransferase THUMPD2 (503 aa).

The region spanning 161 to 266 is the THUMP domain; it reads CQLEKQIKEE…DIYSVVGIPV (106 aa).

This sequence belongs to the methyltransferase superfamily. As to quaternary structure, part of the heterodimeric THUMPD2-TRM112 methyltransferase complex; this complex forms an active tRNA methyltransferase, where TRMT112 acts as an activator of the catalytic subunit THUMPD2. In terms of tissue distribution, expressed in a variety of tissues including brain, colon, gingiva, heart, kidney, liver, lung, placenta, small intestine, spleen and thymus.

Its subcellular location is the nucleus. It carries out the reaction guanosine in U6 snRNA + S-adenosyl-L-methionine = N(2)-methylguanosine in U6 snRNA + S-adenosyl-L-homocysteine + H(+). In terms of biological role, catalytic subunit of the THUMPD2-TRM112 methyltransferase complex, that specifically mediates the S-adenosyl-L-methionine-dependent N(2)-methylation of guanosine nucleotides, most probably at position 72 (m2G72), in the U6snRNA of the major spliceosome. This modification in the U6 snRNA affects the constitutive splicing efficiency of introns that have suboptimal splice sites and can impact final mRNA levels. This Homo sapiens (Human) protein is U6 snRNA (guanine-N(2))-methyltransferase THUMPD2.